Here is a 225-residue protein sequence, read N- to C-terminus: Ribonuclease T (225 aa).

Residues 1–21 form a disordered region; that stretch reads MSEDHFDDEHEGHGGGGGSRH. In terms of domain architecture, Exonuclease spans 33–207; it reads VVVDVETGGF…YDTEKTAELF (175 aa). Mg(2+) is bound by residues D36, E38, H194, and D199. Residue H194 is the Proton donor/acceptor of the active site.

This sequence belongs to the RNase T family. As to quaternary structure, homodimer. Mg(2+) serves as cofactor.

Functionally, trims short 3' overhangs of a variety of RNA species, leaving a one or two nucleotide 3' overhang. Responsible for the end-turnover of tRNA: specifically removes the terminal AMP residue from uncharged tRNA (tRNA-C-C-A). Also appears to be involved in tRNA biosynthesis. This chain is Ribonuclease T, found in Pseudomonas savastanoi pv. phaseolicola (strain 1448A / Race 6) (Pseudomonas syringae pv. phaseolicola (strain 1448A / Race 6)).